Here is a 341-residue protein sequence, read N- to C-terminus: Mitochondrial glutathione transporter SLC25A40 (341 aa).

Solcar repeat units follow at residues 14 to 132, 140 to 224, and 234 to 328; these read ITPS…LRDI, RAEI…VKQS, and PTFA…GKSF. 6 consecutive transmembrane segments (helical) span residues 20-40, 104-124, 143-163, 200-221, 236-256, and 299-319; these read MIAS…LDVV, LWSG…IYFT, IASL…ISPL, WGPT…YELV, FAIS…VTLP, and GLFA…AIMI.

The protein belongs to the mitochondrial carrier (TC 2.A.29) family.

It is found in the mitochondrion inner membrane. The enzyme catalyses glutathione(in) = glutathione(out). Probable mitochondrial transporter required for glutathione import into mitochondria. Glutathione, which plays key roles in oxidative metabolism, is produced exclusively in the cytosol and is imported in many organelles. Mitochondrial glutathione is required for the activity and stability of proteins containing iron-sulfur clusters. In Xenopus tropicalis (Western clawed frog), this protein is Mitochondrial glutathione transporter SLC25A40.